Reading from the N-terminus, the 101-residue chain is ATP-dependent Clp protease adapter protein ClpS (101 aa).

It belongs to the ClpS family. As to quaternary structure, binds to the N-terminal domain of the chaperone ClpA.

Functionally, involved in the modulation of the specificity of the ClpAP-mediated ATP-dependent protein degradation. This Treponema denticola (strain ATCC 35405 / DSM 14222 / CIP 103919 / JCM 8153 / KCTC 15104) protein is ATP-dependent Clp protease adapter protein ClpS.